Reading from the N-terminus, the 241-residue chain is Chloride intracellular channel protein 1 (241 aa).

Residue A2 is modified to N-acetylalanine. The segment at 2–90 (AEEQPQVELF…EEFLEAVLCP (89 aa)) is required for insertion into the membrane. K13 is subject to N6-acetyllysine. Residue C24 participates in glutathione binding. Residue C24 is modified to S-glutathionyl cysteine; alternate. Residues 24-27 (CPFS) carry the G-site motif. An intrachain disulfide couples C24 to C59. A helical membrane pass occupies residues 26 to 46 (FSQRLFMVLWLKGVTFNVTTV). L64 and T77 together coordinate glutathione. In terms of domain architecture, GST C-terminal spans 93–233 (YPKLAALNPE…PDDEEIELAY (141 aa)). K119 is subject to N6-acetyllysine. Phosphoserine is present on S121. At K131 the chain carries N6-acetyllysine. Phosphoserine occurs at positions 156 and 211. Position 233 is a phosphotyrosine (Y233).

This sequence belongs to the chloride channel CLIC family. In terms of assembly, monomer. Homodimer (in vitro). Interacts with TRAPPC2. Dimerization requires a conformation change that leads to the exposure of a large hydrophobic surface. In vivo, this may lead to membrane insertion. Interacts with AKAP9. Post-translationally, hydrogen peroxide treatment causes a conformation change, leading to dimerization and formation of an intramolecular disulfide bond between Cys-24 and Cys-59. As to expression, expression is prominent in heart, placenta, liver, kidney and pancreas.

It localises to the nucleus. It is found in the nucleus membrane. The protein resides in the cytoplasm. Its subcellular location is the cell membrane. The protein localises to the endoplasmic reticulum. The catalysed reaction is L-dehydroascorbate + 2 glutathione = glutathione disulfide + L-ascorbate. It catalyses the reaction chloride(in) = chloride(out). It carries out the reaction iodide(out) = iodide(in). The enzyme catalyses thiocyanate(in) = thiocyanate(out). The catalysed reaction is nitrate(in) = nitrate(out). It catalyses the reaction bromide(in) = bromide(out). It carries out the reaction fluoride(in) = fluoride(out). Its activity is regulated as follows. The oxidoreductase activity is inhibited by rapamycin, amphotericin B and IAA-94. The channel conductance is regulated by pH and redox membrane potential. Inhibited by IAA-94. In the soluble state, catalyzes glutaredoxin-like thiol disulfide exchange reactions with reduced glutathione as electron donor. Reduces selenite and dehydroascorbate and may act as an antioxidant during oxidative stress response. Can insert into membranes and form voltage-dependent multi-ion conductive channels. Membrane insertion seems to be redox-regulated and may occur only under oxidizing conditions. Involved in regulation of the cell cycle. This is Chloride intracellular channel protein 1 from Homo sapiens (Human).